A 680-amino-acid polypeptide reads, in one-letter code: Probable Xaa-Pro aminopeptidase P (680 aa).

The Mn(2+) site is built by D477, D488, E586, and E600.

Belongs to the peptidase M24B family. Mn(2+) is required as a cofactor.

It catalyses the reaction Release of any N-terminal amino acid, including proline, that is linked to proline, even from a dipeptide or tripeptide.. Catalyzes the removal of a penultimate prolyl residue from the N-termini of peptides. The chain is Probable Xaa-Pro aminopeptidase P (AMPP) from Podospora anserina (strain S / ATCC MYA-4624 / DSM 980 / FGSC 10383) (Pleurage anserina).